Reading from the N-terminus, the 354-residue chain is Uroporphyrinogen decarboxylase (354 aa).

Substrate is bound by residues 27-31 (RQAGR), D77, Y154, S209, and H327.

It belongs to the uroporphyrinogen decarboxylase family. Homodimer.

The protein resides in the cytoplasm. The enzyme catalyses uroporphyrinogen III + 4 H(+) = coproporphyrinogen III + 4 CO2. It participates in porphyrin-containing compound metabolism; protoporphyrin-IX biosynthesis; coproporphyrinogen-III from 5-aminolevulinate: step 4/4. Catalyzes the decarboxylation of four acetate groups of uroporphyrinogen-III to yield coproporphyrinogen-III. This is Uroporphyrinogen decarboxylase from Teredinibacter turnerae (strain ATCC 39867 / T7901).